Consider the following 508-residue polypeptide: ATP synthase subunit alpha, chloroplastic (508 aa).

Gly-173 to Thr-180 serves as a coordination point for ATP.

This sequence belongs to the ATPase alpha/beta chains family. In terms of assembly, F-type ATPases have 2 components, CF(1) - the catalytic core - and CF(0) - the membrane proton channel. CF(1) has five subunits: alpha(3), beta(3), gamma(1), delta(1), epsilon(1). CF(0) has four main subunits: a, b, b' and c.

The protein resides in the plastid. The protein localises to the chloroplast thylakoid membrane. It carries out the reaction ATP + H2O + 4 H(+)(in) = ADP + phosphate + 5 H(+)(out). In terms of biological role, produces ATP from ADP in the presence of a proton gradient across the membrane. The alpha chain is a regulatory subunit. The polypeptide is ATP synthase subunit alpha, chloroplastic (Chara vulgaris (Common stonewort)).